The following is a 93-amino-acid chain: Small ribosomal subunit protein uS19 (93 aa).

It belongs to the universal ribosomal protein uS19 family.

Its function is as follows. Protein S19 forms a complex with S13 that binds strongly to the 16S ribosomal RNA. The polypeptide is Small ribosomal subunit protein uS19 (Dehalococcoides mccartyi (strain ATCC BAA-2266 / KCTC 15142 / 195) (Dehalococcoides ethenogenes (strain 195))).